Reading from the N-terminus, the 715-residue chain is Protein sneaky (715 aa).

Over 1–32 (MLSLLTRPFLPIFCFLYGPQSEGSTRIQCLRR) the chain is Cytoplasmic. Residues 33 to 53 (FVTFLLGLVLGFLLWKLAALN) form a helical membrane-spanning segment. At 54–66 (FTLGRLFVNGATD) the chain is on the extracellular side. Residues 67-87 (LYVFIIFVLVTGTIFMLSLPV) traverse the membrane as a helical segment. At 88-109 (RAVILLIFVALVGKSGRTYLRA) the chain is on the cytoplasmic side. Residues 110-130 (VAFAFIISGPIANLVENAGEV) form a helical membrane-spanning segment. Topologically, residues 131 to 373 (ARVFVCTTVL…FERQKRIFNK (243 aa)) are extracellular. A helical transmembrane segment spans residues 374 to 394 (VMGILQKILCLFMLRMVYVSI). The Cytoplasmic segment spans residues 395 to 457 (NYYVKYLNDV…FSRTHHESTT (63 aa)). A helical transmembrane segment spans residues 458–478 (VCFNLLQFLLELVTAGLFILI). Topologically, residues 479–553 (DHLVVELLQI…NAHVLPKKMY (75 aa)) are extracellular. Residues 554–574 (YQLILLYLIIIVLIYQSTTFL) form a helical membrane-spanning segment. The Cytoplasmic segment spans residues 575-715 (RMRRVICSFF…VEVYTYRKEK (141 aa)). Residues 655-691 (CMICRGLEDSTFTVCGNCGLPYCDDCAEDLNSVCFQC) form an RING-type; degenerate zinc finger.

In terms of tissue distribution, specifically expressed in testis.

It is found in the cytoplasmic vesicle. The protein resides in the secretory vesicle. Its subcellular location is the acrosome membrane. It localises to the cytoplasm. The protein localises to the cytoplasmic vesicle membrane. In terms of biological role, component of the sperm acrosome membrane. Required for breakdown of the sperm plasma membrane after sperm entry into the egg, which is an essential prerequisite for successful fertilization. The chain is Protein sneaky from Drosophila melanogaster (Fruit fly).